We begin with the raw amino-acid sequence, 175 residues long: MGKITFFEDRSFQGRCYECSSDCPNLQTYFSRCNSVRVDSGCWMLYERPNYQGHQYFLRRGEYPDYQQWMGFSDSIRSCCLIPQHSGTYRMRIYEKDDFRGQMSEITDDCLSLQDRFHFSEIHSLNVMEGCWVLYEMPSYRGRQYLLRPGEYRRYLDWGAANAKVGSFRRVMDFY.

Beta/gamma crystallin 'Greek key' domains are found at residues 2-40 and 41-83; these read GKIT…RVDS and GCWM…CLIP. The connecting peptide stretch occupies residues 84 to 88; it reads QHSGT. Beta/gamma crystallin 'Greek key' domains are found at residues 89-129 and 130-172; these read YRMR…NVME and GCWV…RRVM.

The protein belongs to the beta/gamma-crystallin family.

Crystallins are the dominant structural components of the vertebrate eye lens. The protein is Gamma-crystallin B (Crygb) of Mus musculus (Mouse).